The following is a 111-amino-acid chain: Ribosome-binding factor A (111 aa).

This sequence belongs to the RbfA family. In terms of assembly, monomer. Binds 30S ribosomal subunits, but not 50S ribosomal subunits or 70S ribosomes.

It is found in the cytoplasm. In terms of biological role, one of several proteins that assist in the late maturation steps of the functional core of the 30S ribosomal subunit. Associates with free 30S ribosomal subunits (but not with 30S subunits that are part of 70S ribosomes or polysomes). Required for efficient processing of 16S rRNA. May interact with the 5'-terminal helix region of 16S rRNA. This is Ribosome-binding factor A from Helicobacter pylori (strain HPAG1).